The primary structure comprises 46 residues: Thymosin beta-a (46 aa).

The segment covering 21-30 (TNTAEKNTLP) has biased composition (polar residues). The segment at 21 to 46 (TNTAEKNTLPTKEDIDQEKKAAEGGK) is disordered. Positions 31-46 (TKEDIDQEKKAAEGGK) are enriched in basic and acidic residues.

It belongs to the thymosin beta family.

It is found in the cytoplasm. It localises to the cytoskeleton. In terms of biological role, plays an important role in the organization of the cytoskeleton. Binds to and sequesters actin monomers (G actin) and therefore inhibits actin polymerization. The chain is Thymosin beta-a from Cyprinus carpio (Common carp).